A 47-amino-acid polypeptide reads, in one-letter code: Light-harvesting protein B800/850/890 alpha-2 chain (47 aa).

The Cytoplasmic segment spans residues 1–12 (MWRMWKILDYRR). The helical transmembrane segment at 13 to 33 (TVVLAHVGMAVLALLIHFILL) threads the bilayer. His-29 serves as a coordination point for a bacteriochlorophyll. At 34-47 (STESFNWLEGNPYG) the chain is on the periplasmic side.

It belongs to the antenna complex alpha subunit family. The core complex is formed by different alpha and beta chains, binding bacteriochlorophyll molecules, and arranged most probably in tetrameric structures disposed around the reaction center. The non-pigmented gamma chains may constitute additional components.

Its subcellular location is the cell inner membrane. Functionally, antenna complexes are light-harvesting systems, which transfer the excitation energy to the reaction centers. The protein is Light-harvesting protein B800/850/890 alpha-2 chain of Halorhodospira halophila (strain DSM 244 / SL1) (Ectothiorhodospira halophila (strain DSM 244 / SL1)).